Consider the following 378-residue polypeptide: IDS-type sesquiterpene synthase (378 aa).

Mg(2+) is bound by residues Asp120 and Asp124. The DDXXD motif motif lies at 120–124 (DDYVD).

The protein belongs to the terpene synthase family. The cofactor is Mg(2+). In terms of tissue distribution, highly expressed in male epidermal tissue associated with the cuticle of ventral sternites.

The catalysed reaction is (2Z,6E)-farnesyl diphosphate = (Z)-alpha-bisabolene + diphosphate. It functions in the pathway pheromone biosynthesis. In terms of biological role, sesquiterpene alcohol synthase that catalyzes the formation of the pheromone precursor (Z)-alpha-bisabolene from (2Z,6E)-farnesyl diphosphate. The chain is IDS-type sesquiterpene synthase from Nezara viridula (Southern green stink bug).